A 464-amino-acid chain; its full sequence is Cysteine--tRNA ligase (464 aa).

C27 contacts Zn(2+). A 'HIGH' region motif is present at residues P29–N39. Zn(2+) contacts are provided by C207, H232, and E236. The 'KMSKS' region motif lies at K264–S268. Position 267 (K267) interacts with ATP.

Belongs to the class-I aminoacyl-tRNA synthetase family. Monomer. Zn(2+) serves as cofactor.

It localises to the cytoplasm. The enzyme catalyses tRNA(Cys) + L-cysteine + ATP = L-cysteinyl-tRNA(Cys) + AMP + diphosphate. The chain is Cysteine--tRNA ligase from Alkaliphilus oremlandii (strain OhILAs) (Clostridium oremlandii (strain OhILAs)).